The primary structure comprises 246 residues: Phycocyanobilin:ferredoxin oxidoreductase (246 aa).

It belongs to the HY2 family.

The catalysed reaction is (2R,3Z)-phycocyanobilin + 4 oxidized [2Fe-2S]-[ferredoxin] = biliverdin IXalpha + 4 reduced [2Fe-2S]-[ferredoxin] + 4 H(+). Catalyzes the four-electron reduction of biliverdin IX-alpha (2-electron reduction at both the A and D rings); the reaction proceeds via an isolatable 2-electron intermediate, 181,182-dihydrobiliverdin. This Crocosphaera subtropica (strain ATCC 51142 / BH68) (Cyanothece sp. (strain ATCC 51142)) protein is Phycocyanobilin:ferredoxin oxidoreductase.